A 345-amino-acid chain; its full sequence is Membrane progestin receptor gamma-A (345 aa).

Over 1-52 (MLNLIKLPQVFTINQVPKVFHEDGIISGYRHPCSSAKDCVLSLFQLTNETLN) the chain is Cytoplasmic. The helical transmembrane segment at 53-73 (IWTHFLPTWFFLWKLLTVVLV) threads the bilayer. Residues 74-80 (LEDWRDP) are Extracellular-facing. Residues 81–101 (FIWPFLVFLLSCCVYPLASSC) traverse the membrane as a helical segment. Topologically, residues 102–114 (AHTFSTMSERARH) are cytoplasmic. A helical transmembrane segment spans residues 115–135 (ICFFFDYGALSFYSLGSAIIY). The Extracellular portion of the chain corresponds to 136 to 148 (SSYSFPDKWVNGT). The helical transmembrane segment at 149-169 (FHLNYVSIAVVNSIISTALAC) threads the bilayer. The Cytoplasmic portion of the chain corresponds to 170-201 (YSRLGLPFLEYNCHSIKRPSGKLDQKLCKCLR). The chain crosses the membrane as a helical span at residues 202–222 (IIAFVYPYLFDNIPLFYRIFV). Residues 223-272 (CAGEGCTVNEANTVHYQHTSLAFFTGFLFATHLPERLAPGSFDYIGHSHQ) lie on the Extracellular side of the membrane. Residues 273 to 293 (LFHVFAIIGTYFQMTAIELDM) traverse the membrane as a helical segment. Topologically, residues 294-314 (AARKQWLHAHLPPVTFLNTVG) are cytoplasmic. A helical transmembrane segment spans residues 315–335 (AAFFSVVSGLCIVYVFSLSLF). Residues 336–345 (STRGVKNKSF) are Extracellular-facing.

The protein belongs to the ADIPOR family.

The protein localises to the membrane. In terms of biological role, steroid membrane receptor. Binds progesterone. May be involved in oocyte maturation. This Danio rerio (Zebrafish) protein is Membrane progestin receptor gamma-A (paqr5a).